The sequence spans 356 residues: TPR repeat-containing protein P27G11.02 (356 aa).

The transit peptide at 1-20 (MRMQWIWKSRRSLQNVFIRR) directs the protein to the mitochondrion. TPR repeat units follow at residues 194-227 (SRLF…TMAN) and 290-323 (AAAF…RKDD).

It is found in the mitochondrion. This Schizosaccharomyces pombe (strain 972 / ATCC 24843) (Fission yeast) protein is TPR repeat-containing protein P27G11.02.